We begin with the raw amino-acid sequence, 279 residues long: tRNA (carboxymethyluridine(34)-5-O)-methyltransferase (279 aa).

Residues 172–236 (KSKSKPKTKS…QQQDQEQERE (65 aa)) are disordered. The span at 200–229 (PKERSEYLQRWKEEQQRSKSLDDNDEKQQQ) shows a compositional bias: basic and acidic residues.

As to quaternary structure, interacts with TRM112.

It is found in the cytoplasm. The protein localises to the nucleus. It carries out the reaction 5-(carboxymethyl)uridine(34) in tRNA + S-adenosyl-L-methionine = 5-(2-methoxy-2-oxoethyl)uridine(34) in tRNA + S-adenosyl-L-homocysteine. In terms of biological role, required for the methylation of the wobble bases at position 34 in tRNA. Appears to have a role in stress-response. The sequence is that of tRNA (carboxymethyluridine(34)-5-O)-methyltransferase (TRM9) from Saccharomyces cerevisiae (strain ATCC 204508 / S288c) (Baker's yeast).